The sequence spans 424 residues: Sulfatase ppz1 (424 aa).

3 residues coordinate Ca(2+): Asp-13, Asp-203, and Asn-204.

It belongs to the sulfatase family. Ca(2+) is required as a cofactor.

Its function is as follows. Sulfatase; part of the gene cluster that mediates the biosynthesis of pyrrolopyrazines, secondary metabolites showing insecticidal activity. The role of ppz1 within the pathway has still to be determined. The single multifunctional NRPS ppzA is sufficient to produce peramine via condensation of 1-pyrroline-5-carboxylate and arginine, N-methylation of the alpha-amino group of arginine and reduction of the thioester and the cyclization to form an iminium ion resulting in release from the peptide synthetase. Deprotonation of this intermediate and oxidation of the pyrroline ring would give rise to peramine. In Epichloe species that produce only peramine, the peramine synthetase gene is not localized in a gene cluster, in contrast to Metarhizium species that contain additional pyrrolopyrazine biosynthesis genes. The 2-oxoglutarate-Fe(II) type oxidoreductase ppzC hydroxylates peramine to yield the newly identified compound 8-hydroxyperamine whereas ppzD converts L-proline into trans-4-hydroxy-L-proline, a precursor of peramine biosynthesis. This chain is Sulfatase ppz1, found in Metarhizium majus (strain ARSEF 297).